Consider the following 135-residue polypeptide: MSDHNLKDDDYWRSKLTDEEFRICREKGTEMPFSGKYVDTTEAGTYLCRCCNTPLFKSLAKFDAGCGWPSFFEPLEKGVITEEMDTSLGMVRTEIMCEACGCHLGHVFTDGPQPTGLRYCVNSASIQFEEEKNQS.

One can recognise a MsrB domain in the interval D9–E131. Zn(2+) contacts are provided by C48, C51, C97, and C100. Residue C120 is the Nucleophile of the active site.

It belongs to the MsrB Met sulfoxide reductase family. It depends on Zn(2+) as a cofactor.

It carries out the reaction L-methionyl-[protein] + [thioredoxin]-disulfide + H2O = L-methionyl-(R)-S-oxide-[protein] + [thioredoxin]-dithiol. This chain is Peptide methionine sulfoxide reductase MsrB, found in Teredinibacter turnerae (strain ATCC 39867 / T7901).